Here is a 367-residue protein sequence, read N- to C-terminus: Glutamate 5-kinase (367 aa).

Lysine 9 serves as a coordination point for ATP. Substrate is bound by residues serine 49, aspartate 136, and asparagine 148. Residues 168-169 (TD) and 210-216 (TGGMKSK) contribute to the ATP site. The region spanning 276-350 (SGQIEVDAGA…GMQSQDIQVR (75 aa)) is the PUA domain.

The protein belongs to the glutamate 5-kinase family.

The protein localises to the cytoplasm. It catalyses the reaction L-glutamate + ATP = L-glutamyl 5-phosphate + ADP. The protein operates within amino-acid biosynthesis; L-proline biosynthesis; L-glutamate 5-semialdehyde from L-glutamate: step 1/2. Catalyzes the transfer of a phosphate group to glutamate to form L-glutamate 5-phosphate. This is Glutamate 5-kinase from Bacillus cereus (strain B4264).